Consider the following 291-residue polypeptide: ATP synthase gamma chain (291 aa).

It belongs to the ATPase gamma chain family. In terms of assembly, F-type ATPases have 2 components, CF(1) - the catalytic core - and CF(0) - the membrane proton channel. CF(1) has five subunits: alpha(3), beta(3), gamma(1), delta(1), epsilon(1). CF(0) has three main subunits: a, b and c.

It localises to the cell inner membrane. In terms of biological role, produces ATP from ADP in the presence of a proton gradient across the membrane. The gamma chain is believed to be important in regulating ATPase activity and the flow of protons through the CF(0) complex. This is ATP synthase gamma chain from Persephonella marina (strain DSM 14350 / EX-H1).